The following is a 358-amino-acid chain: Ion-translocating oxidoreductase complex subunit D (358 aa).

Helical transmembrane passes span 19 to 39 (IMLW…YYFG), 41 to 61 (GVVL…FIAI), 79 to 99 (LTAL…VIII), and 125 to 145 (IGYV…MPPI). Residue threonine 186 is modified to FMN phosphoryl threonine. Helical transmembrane passes span 220–240 (FAQG…FLIL), 248–268 (IPVA…FTGF), 271–291 (LSAI…FIAT), 297–317 (SITP…VYLI), and 321–341 (GNYP…VPLI).

It belongs to the NqrB/RnfD family. The complex is composed of six subunits: RnfA, RnfB, RnfC, RnfD, RnfE and RnfG. FMN serves as cofactor.

The protein localises to the cell inner membrane. Part of a membrane-bound complex that couples electron transfer with translocation of ions across the membrane. The sequence is that of Ion-translocating oxidoreductase complex subunit D from Haemophilus influenzae (strain PittGG).